A 638-amino-acid polypeptide reads, in one-letter code: uncharacterized protein (638 aa).

This is an uncharacterized protein from Homo sapiens (Human).